The sequence spans 130 residues: Astrocytic phosphoprotein PEA-15 (130 aa).

The region spanning 3 to 81 (EYGTLLQDLT…RPDLLTMVVD (79 aa)) is the DED domain. Phosphoserine is present on residues Ser61, Ser90, Ser104, and Ser116. The segment at 98 to 107 (KLTRIPSAKK) is microtubule-binding. The microtubule-binding stretch occupies residues 122–129 (KLAPPPKK).

In terms of assembly, binds RPS6KA3, MAPK3 and MAPK1. Transient interaction with PLD1 and PLD2. Interacts with CASP8 and FADD. In terms of processing, phosphorylated by protein kinase C and calcium-calmodulin-dependent protein kinase. These phosphorylation events are modulated by neurotransmitters or hormones. Ubiquitously expressed. Most abundant in tissues such as heart, brain, muscle and adipose tissue which utilize glucose as an energy source. Lower expression in glucose-producing tissues. Higher levels of expression are found in tissues from individuals with type 2 diabetes than in controls.

It localises to the cytoplasm. Its function is as follows. Blocks Ras-mediated inhibition of integrin activation and modulates the ERK MAP kinase cascade. Inhibits RPS6KA3 activities by retaining it in the cytoplasm. Inhibits both TNFRSF6- and TNFRSF1A-mediated CASP8 activity and apoptosis. Regulates glucose transport by controlling both the content of SLC2A1 glucose transporters on the plasma membrane and the insulin-dependent trafficking of SLC2A4 from the cell interior to the surface. The chain is Astrocytic phosphoprotein PEA-15 (PEA15) from Homo sapiens (Human).